An 84-amino-acid polypeptide reads, in one-letter code: Small ribosomal subunit protein uS17 (84 aa).

The protein belongs to the universal ribosomal protein uS17 family. Part of the 30S ribosomal subunit.

Functionally, one of the primary rRNA binding proteins, it binds specifically to the 5'-end of 16S ribosomal RNA. This chain is Small ribosomal subunit protein uS17, found in Erwinia tasmaniensis (strain DSM 17950 / CFBP 7177 / CIP 109463 / NCPPB 4357 / Et1/99).